The following is a 241-amino-acid chain: DnaA regulatory inactivator Hda (241 aa).

Belongs to the DnaA family. HdA subfamily. In terms of assembly, the active form seems to be an ADP-bound monomer. Forms the RIDA complex (regulatory inactivation of DnaA) of ATP-DnaA, ADP-Hda and the DNA-loaded beta sliding clamp (dnaN).

In terms of biological role, mediates the interaction of DNA replication initiator protein DnaA with DNA polymerase subunit beta sliding clamp (dnaN). Stimulates hydrolysis of ATP-DnaA to ADP-DnaA, rendering DnaA inactive for reinitiation, a process called regulatory inhibition of DnaA or RIDA. The sequence is that of DnaA regulatory inactivator Hda from Salmonella arizonae (strain ATCC BAA-731 / CDC346-86 / RSK2980).